The chain runs to 382 residues: Pyruvate dehydrogenase E1 component subunit beta, mitochondrial (382 aa).

The N-terminal 46 residues, 1–46 (MSRFLRPAFRLATTATRASTIRPTPSSLITKAAAVPTTRLLQKRSY), are a transit peptide targeting the mitochondrion. Residue Glu-112 participates in thiamine diphosphate binding. Ile-165, Ala-213, Ile-214, Asp-216, and Asn-218 together coordinate K(+).

As to quaternary structure, eukaryotic pyruvate dehydrogenase (PDH) complexes are organized as a core consisting of the oligomeric dihydrolipoamide acetyl-transferase (E2), around which are arranged multiple copies of pyruvate dehydrogenase (E1), dihydrolipoamide dehydrogenase (E3) and protein X (E3BP) bound by non-covalent bonds. The Chaetomium thermophilum PDH complex contains 60 E2 units, 12 E3BP units, about 20 E1 units, and 12 or more E3 units. The units are organized in 1 E2 60-mer, 4 E3BP trimers, about 20 E1 tetramers, and a maximum of 12 E3 dimers. Pyruvate dehydrogenase (E1) is active as a tetramer of 2 alpha and 2 beta subunits. The E3BP trimers are bound inside the icosahedral core with tetrahedral symmetry. Thiamine diphosphate serves as cofactor.

Its subcellular location is the mitochondrion. The catalysed reaction is N(6)-[(R)-lipoyl]-L-lysyl-[protein] + pyruvate + H(+) = N(6)-[(R)-S(8)-acetyldihydrolipoyl]-L-lysyl-[protein] + CO2. Functionally, the 10-megadalton pyruvate dehydrogenase complex contains multiple copies of three enzymatic components: pyruvate dehydrogenase (E1), dihydrolipoamide acetyltransferase (E2) and lipoamide dehydrogenase (E3) and catalyzes the overall oxidative decarboxylation of pyruvate to form acetyl-CoA and CO(2). Within the complex, pyruvate and thiamine pyrophosphate (TPP or vitamin B1) are bound by pyruvate dehydrogenase E1 subunits alpha and beta and pyruvate is decarboxylated leading to the 2-carbon hydrohyethyl bound to TPP. The E2 component contains covalently-bound lipoyl cofactors and transfers the hydroxyethyl group from TPP to an oxidized form of covalently bound lipoamide, and the resulting acetyl group is then transferred to free coenzyme A to form acetyl-CoA and reduced dihydrolipoamide-E2. Finally, the flavoprotein dihydrolipoamide dehydrogenase (E3) re-oxidizes the lipoyl group of dihydrolipoamide-E2 to form lipoamide-E2 and NADH. A fourth subunit, E3BP, is responsible for tethering E3 in proximity to the core, forming the entire metabolon. The chain is Pyruvate dehydrogenase E1 component subunit beta, mitochondrial from Chaetomium thermophilum (strain DSM 1495 / CBS 144.50 / IMI 039719) (Thermochaetoides thermophila).